We begin with the raw amino-acid sequence, 366 residues long: NADP-dependent isopropanol dehydrogenase (366 aa).

4 residues coordinate Zn(2+): Cys-43, His-65, Glu-66, and Asp-156. NADP(+) contacts are provided by residues 181 to 184, 204 to 206, Tyr-224, 271 to 273, and Lys-346; these read IGPV, GSR, and VNY.

Belongs to the zinc-containing alcohol dehydrogenase family. In terms of assembly, homodimer. Zn(2+) is required as a cofactor.

The protein localises to the cytoplasm. The catalysed reaction is propan-2-ol + NADP(+) = acetone + NADPH + H(+). In terms of biological role, alcohol dehydrogenase with a preference for medium chain secondary alcohols, such as 2-butanol and isopropanol. Has very low activity with primary alcohols, such as ethanol. Under physiological conditions, the enzyme reduces aldehydes and 2-ketones to produce secondary alcohols. Is also active with acetaldehyde and propionaldehyde. The polypeptide is NADP-dependent isopropanol dehydrogenase (Entamoeba histolytica (strain ATCC 30459 / HM-1:IMSS / ABRM)).